A 688-amino-acid polypeptide reads, in one-letter code: MAENLVIVESPAKAKTIEKYLGKKYKVIASMGHVRDLPRSQMGVDAENDYEPKYITIRGKGPVVKELKKHAKKAKKVFLASDPDREGEAIAWHLANILNLEDSTENRVVFNEITKDAVKDSFKHPRGIEMELVDAQQARRILDRLVGYNISPVLWKKVKKGLSAGRVQSVALRLVIDRENEIRNFKPEEYWKIEGEFRYKKTKFTAKFLHFKNKPFKLTEKADVEKITTQLDGDQFEVTKVTKKEKTRYPANPFTTSTLQQEAARKLNFKARKTMMLAQQLYEGIDLKKQGTVGLITYMRTDSTRISDQAQSEAKNYIQETYGNDYTSNRKSKGQGDQDAHEAIRPSSTLRTPNEMKNFLTRDQHRLYKLIWERFVASQMAPAILDTVAMDLTQNDIKFRANGQTIKFKGFMTLYVETKDDSEDGKDNKLPNIGEGEMVTATNIEPSQHFTQPPPRYTEARLVKTMEELKIGRPSTYAPTIDTIQKRNYVKNESKRFVPTELGEIVHEQVKDYFPEIIDVDFTVNMETLLDKVADGEIGWKKVISDFYSSFKQDVERAEEEMEKIEIKDEPAGEDCEVCGSPMVIKMGRYGKFMACSNFPDCRNTKAIVKTIGVTCPKCKEGDVVERKSKKNRIFYGCSKYPECDFVTWDKPIGRDCPKCEHYLVEKKQGRKSQVVCSNCDYKEEEQK.

Residues 3 to 113 (ENLVIVESPA…TENRVVFNEI (111 aa)) form the Toprim domain. Positions 9 and 82 each coordinate Mg(2+). Residues 129–556 (EMELVDAQQA…FYSSFKQDVE (428 aa)) enclose the Topo IA-type catalytic domain. An interaction with DNA region spans residues 163 to 168 (SAGRVQ). Y298 serves as the catalytic O-(5'-phospho-DNA)-tyrosine intermediate. A disordered region spans residues 322 to 349 (YGNDYTSNRKSKGQGDQDAHEAIRPSST). Basic and acidic residues predominate over residues 334–344 (GQGDQDAHEAI). 3 C4-type zinc fingers span residues 576–602 (CEVC…FPDC), 616–644 (CPKC…YPEC), and 657–680 (CPKC…CSNC).

It belongs to the type IA topoisomerase family. Monomer. It depends on Mg(2+) as a cofactor.

It carries out the reaction ATP-independent breakage of single-stranded DNA, followed by passage and rejoining.. In terms of biological role, releases the supercoiling and torsional tension of DNA, which is introduced during the DNA replication and transcription, by transiently cleaving and rejoining one strand of the DNA duplex. Introduces a single-strand break via transesterification at a target site in duplex DNA. The scissile phosphodiester is attacked by the catalytic tyrosine of the enzyme, resulting in the formation of a DNA-(5'-phosphotyrosyl)-enzyme intermediate and the expulsion of a 3'-OH DNA strand. The free DNA strand then undergoes passage around the unbroken strand, thus removing DNA supercoils. Finally, in the religation step, the DNA 3'-OH attacks the covalent intermediate to expel the active-site tyrosine and restore the DNA phosphodiester backbone. The protein is DNA topoisomerase 1 of Staphylococcus saprophyticus subsp. saprophyticus (strain ATCC 15305 / DSM 20229 / NCIMB 8711 / NCTC 7292 / S-41).